A 170-amino-acid chain; its full sequence is Urease accessory protein UreE (170 aa).

Positions 137-170 (PFDPESGAYAHAGREQSHAHSHEHSHADGHTHAH) are disordered. Over residues 148–170 (AGREQSHAHSHEHSHADGHTHAH) the composition is skewed to basic and acidic residues.

Belongs to the UreE family.

It localises to the cytoplasm. In terms of biological role, involved in urease metallocenter assembly. Binds nickel. Probably functions as a nickel donor during metallocenter assembly. The sequence is that of Urease accessory protein UreE from Pseudoalteromonas translucida (strain TAC 125).